The chain runs to 279 residues: Probable endonuclease 4 (279 aa).

9 residues coordinate Zn(2+): H68, H108, E143, D177, H180, H214, D227, H229, and E259.

Belongs to the AP endonuclease 2 family. The cofactor is Zn(2+).

The catalysed reaction is Endonucleolytic cleavage to 5'-phosphooligonucleotide end-products.. In terms of biological role, endonuclease IV plays a role in DNA repair. It cleaves phosphodiester bonds at apurinic or apyrimidinic (AP) sites, generating a 3'-hydroxyl group and a 5'-terminal sugar phosphate. The polypeptide is Probable endonuclease 4 (Nitrosopumilus maritimus (strain SCM1)).